The following is a 119-amino-acid chain: MNLAAYFPVLLFLVVGTGLGVALVSIGKILGPNKPDTEKNAPYECGFEAFEDARMKFDVRYYLVAILFIIFDLETAFLFPWGVALRDIGWPGFLAMMIFLLEFLLGFAYIWKKGGLDWE.

3 consecutive transmembrane segments (helical) span residues 7–27 (FPVL…VSIG), 63–83 (LVAI…PWGV), and 88–108 (IGWP…LGFA).

This sequence belongs to the complex I subunit 3 family. In terms of assembly, NDH-1 is composed of 14 different subunits. Subunits NuoA, H, J, K, L, M, N constitute the membrane sector of the complex.

Its subcellular location is the cell inner membrane. It catalyses the reaction a quinone + NADH + 5 H(+)(in) = a quinol + NAD(+) + 4 H(+)(out). Its function is as follows. NDH-1 shuttles electrons from NADH, via FMN and iron-sulfur (Fe-S) centers, to quinones in the respiratory chain. The immediate electron acceptor for the enzyme in this species is believed to be ubiquinone. Couples the redox reaction to proton translocation (for every two electrons transferred, four hydrogen ions are translocated across the cytoplasmic membrane), and thus conserves the redox energy in a proton gradient. The protein is NADH-quinone oxidoreductase subunit A of Paraburkholderia phytofirmans (strain DSM 17436 / LMG 22146 / PsJN) (Burkholderia phytofirmans).